We begin with the raw amino-acid sequence, 77 residues long: Liver-expressed antimicrobial peptide 2 (77 aa).

The first 22 residues, 1-22, serve as a signal peptide directing secretion; sequence MWHLKLCAVLMIFLLLLGQTDG. The propeptide occupies 23 to 37; the sequence is SPIPEVSSAKRRPRR. 2 cysteine pairs are disulfide-bonded: C54-C65 and C60-C70.

This sequence belongs to the LEAP2 family.

It localises to the secreted. Its function is as follows. Has an antimicrobial activity. This Macaca mulatta (Rhesus macaque) protein is Liver-expressed antimicrobial peptide 2 (LEAP2).